Reading from the N-terminus, the 368-residue chain is UDP-N-acetylglucosamine--N-acetylmuramyl-(pentapeptide) pyrophosphoryl-undecaprenol N-acetylglucosamine transferase (368 aa).

UDP-N-acetyl-alpha-D-glucosamine is bound by residues 10 to 12 (TGG), Asn-126, Ser-200, Ile-255, and Gln-300.

This sequence belongs to the glycosyltransferase 28 family. MurG subfamily.

It localises to the cell membrane. The enzyme catalyses Mur2Ac(oyl-L-Ala-gamma-D-Glu-L-Lys-D-Ala-D-Ala)-di-trans,octa-cis-undecaprenyl diphosphate + UDP-N-acetyl-alpha-D-glucosamine = beta-D-GlcNAc-(1-&gt;4)-Mur2Ac(oyl-L-Ala-gamma-D-Glu-L-Lys-D-Ala-D-Ala)-di-trans,octa-cis-undecaprenyl diphosphate + UDP + H(+). It functions in the pathway cell wall biogenesis; peptidoglycan biosynthesis. Its function is as follows. Cell wall formation. Catalyzes the transfer of a GlcNAc subunit on undecaprenyl-pyrophosphoryl-MurNAc-pentapeptide (lipid intermediate I) to form undecaprenyl-pyrophosphoryl-MurNAc-(pentapeptide)GlcNAc (lipid intermediate II). The polypeptide is UDP-N-acetylglucosamine--N-acetylmuramyl-(pentapeptide) pyrophosphoryl-undecaprenol N-acetylglucosamine transferase (Lactobacillus helveticus (strain DPC 4571)).